Consider the following 396-residue polypeptide: Probable protein phosphatase 2C 25 (396 aa).

Residues 32–98 (ESLSLTLSHR…SPPGGVLKRK (67 aa)) are disordered. Residues 44 to 61 (QTSSPSSPSTTVSSPKSP) are compositionally biased toward low complexity. Residues 139 to 392 (GYSVYCKRGR…DDISVMLIPL (254 aa)) enclose the PPM-type phosphatase domain. Positions 175, 176, 338, and 383 each coordinate Mn(2+).

The protein belongs to the PP2C family. Interacts with MPK4 and MPK6. The cofactor is Mg(2+). Requires Mn(2+) as cofactor.

It localises to the cytoplasm. Its subcellular location is the nucleus. The enzyme catalyses O-phospho-L-seryl-[protein] + H2O = L-seryl-[protein] + phosphate. The catalysed reaction is O-phospho-L-threonyl-[protein] + H2O = L-threonyl-[protein] + phosphate. In terms of biological role, protein phosphatase that negatively regulates defense respones. Inactivates MPK4 and MPK6 MAP kinases involved in stress and defense signaling. In Arabidopsis thaliana (Mouse-ear cress), this protein is Probable protein phosphatase 2C 25.